We begin with the raw amino-acid sequence, 392 residues long: Methylthioribose-1-phosphate isomerase (392 aa).

Residue Asp-267 is the Proton donor of the active site.

It belongs to the eIF-2B alpha/beta/delta subunits family. MtnA subfamily.

The protein resides in the cytoplasm. Its subcellular location is the nucleus. The enzyme catalyses 5-(methylsulfanyl)-alpha-D-ribose 1-phosphate = 5-(methylsulfanyl)-D-ribulose 1-phosphate. The protein operates within amino-acid biosynthesis; L-methionine biosynthesis via salvage pathway; L-methionine from S-methyl-5-thio-alpha-D-ribose 1-phosphate: step 1/6. Catalyzes the interconversion of methylthioribose-1-phosphate (MTR-1-P) into methylthioribulose-1-phosphate (MTRu-1-P). This is Methylthioribose-1-phosphate isomerase from Blastomyces gilchristii (strain SLH14081) (Blastomyces dermatitidis).